Reading from the N-terminus, the 604-residue chain is Putative sodium-dependent multivitamin transporter (604 aa).

The next 6 membrane-spanning stretches (helical) occupy residues 4–24 (LGAW…AIGI), 48–68 (VAPV…ILGV), 78–98 (MFVV…YLII), 134–154 (VLYM…VTGL), 160–180 (IVIV…KAVL), and 188–208 (LLMF…AGSL). 2 N-linked (GlcNAc...) asparagine glycosylation sites follow: Asn222 and Asn225. 7 consecutive transmembrane segments (helical) span residues 234 to 254 (HTWF…YGVN), 273 to 293 (ALWW…FSGL), 331 to 351 (LAGL…SSII), 389 to 409 (LFFG…GGLL), 413 to 433 (LSIF…GMYV), 440 to 460 (GAIG…FGQP), and 511 to 531 (ALGF…FALL).

The protein belongs to the sodium:solute symporter (SSF) (TC 2.A.21) family.

Its subcellular location is the cell membrane. This is Putative sodium-dependent multivitamin transporter from Drosophila melanogaster (Fruit fly).